Here is a 714-residue protein sequence, read N- to C-terminus: Inducible lysine decarboxylase (714 aa).

Lysine 367 carries the N6-(pyridoxal phosphate)lysine modification.

It belongs to the Orn/Lys/Arg decarboxylase class-I family. Homodecamer. Interacts with RavA. Requires pyridoxal 5'-phosphate as cofactor.

Its subcellular location is the cytoplasm. It carries out the reaction L-lysine + H(+) = cadaverine + CO2. This chain is Inducible lysine decarboxylase (cadA), found in Salmonella typhi.